A 504-amino-acid polypeptide reads, in one-letter code: Ribose import ATP-binding protein RbsA (504 aa).

ABC transporter domains are found at residues 6–242 (LELN…VGRR) and 250–495 (IDVQ…VGKT). Residue 38–45 (GENGAGKS) coordinates ATP.

It belongs to the ABC transporter superfamily. Ribose importer (TC 3.A.1.2.1) family. In terms of assembly, the complex is composed of an ATP-binding protein (RbsA), two transmembrane proteins (RbsC) and a solute-binding protein (RbsB).

It is found in the cell inner membrane. It catalyses the reaction D-ribose(out) + ATP + H2O = D-ribose(in) + ADP + phosphate + H(+). Its function is as follows. Part of the ABC transporter complex RbsABC involved in ribose import. Responsible for energy coupling to the transport system. In Aliivibrio fischeri (strain ATCC 700601 / ES114) (Vibrio fischeri), this protein is Ribose import ATP-binding protein RbsA.